Here is a 105-residue protein sequence, read N- to C-terminus: Pyrimidine/purine nucleoside phosphorylase (105 aa).

It belongs to the nucleoside phosphorylase PpnP family.

It catalyses the reaction a purine D-ribonucleoside + phosphate = a purine nucleobase + alpha-D-ribose 1-phosphate. The catalysed reaction is adenosine + phosphate = alpha-D-ribose 1-phosphate + adenine. It carries out the reaction cytidine + phosphate = cytosine + alpha-D-ribose 1-phosphate. The enzyme catalyses guanosine + phosphate = alpha-D-ribose 1-phosphate + guanine. It catalyses the reaction inosine + phosphate = alpha-D-ribose 1-phosphate + hypoxanthine. The catalysed reaction is thymidine + phosphate = 2-deoxy-alpha-D-ribose 1-phosphate + thymine. It carries out the reaction uridine + phosphate = alpha-D-ribose 1-phosphate + uracil. The enzyme catalyses xanthosine + phosphate = alpha-D-ribose 1-phosphate + xanthine. In terms of biological role, catalyzes the phosphorolysis of diverse nucleosides, yielding D-ribose 1-phosphate and the respective free bases. Can use uridine, adenosine, guanosine, cytidine, thymidine, inosine and xanthosine as substrates. Also catalyzes the reverse reactions. The polypeptide is Pyrimidine/purine nucleoside phosphorylase (Ralstonia pickettii (strain 12J)).